The primary structure comprises 671 residues: Carbohydrate acetyl esterase/feruloyl esterase (671 aa).

The N-terminal stretch at 1–24 is a signal peptide; that stretch reads MYQSTLKTILLASALLILPASMSA. The segment at 1–296 is carbohydrate acetyl esterase; the sequence is MYQSTLKTIL…YGEAVARHLG (296 aa). Catalysis depends on for acetyl esterase activity residues Ser-55, Asp-271, and His-274. The segment at 297-671 is feruloyl esterase; that stretch reads YEPKRPYIEM…NEFIPHLFKK (375 aa).

In the N-terminal section; belongs to the carbohydrate esterase 6 family.

It catalyses the reaction feruloyl-polysaccharide + H2O = ferulate + polysaccharide.. The protein operates within glycan degradation; xylan degradation. Functionally, involved in degradation of plant cell wall polysaccharides. Bifunctional esterase that possesses both acetyl esterase and ferulic acid esterase activities. Has deacetylase activity towards acetylated xylo-oligosaccharides smaller than xylo-heptaose, as well as from glucose-pentaacetate. Is also able to release ferulic acid from methylferulate, and from the more natural substrates wheat bran, corn fiber, and XOS(FA,Ac), a corn fiber-derived substrate enriched in O-acetyl and ferulic acid esters. The chain is Carbohydrate acetyl esterase/feruloyl esterase from Xylanibacter ruminicola (strain ATCC 19189 / DSM 19721 / CIP 105475 / JCM 8958 / 23) (Prevotella ruminicola).